The sequence spans 342 residues: N-acetyl-gamma-glutamyl-phosphate reductase (342 aa).

C147 is a catalytic residue.

The protein belongs to the NAGSA dehydrogenase family. Type 1 subfamily.

The protein resides in the cytoplasm. It catalyses the reaction N-acetyl-L-glutamate 5-semialdehyde + phosphate + NADP(+) = N-acetyl-L-glutamyl 5-phosphate + NADPH + H(+). It participates in amino-acid biosynthesis; L-arginine biosynthesis; N(2)-acetyl-L-ornithine from L-glutamate: step 3/4. Functionally, catalyzes the NADPH-dependent reduction of N-acetyl-5-glutamyl phosphate to yield N-acetyl-L-glutamate 5-semialdehyde. This chain is N-acetyl-gamma-glutamyl-phosphate reductase, found in Campylobacter jejuni subsp. jejuni serotype O:23/36 (strain 81-176).